The sequence spans 87 residues: Small ribosomal subunit protein bS20 (87 aa).

Residues 1 to 23 (MANHKSAIKRHKQSVKRAARNRA) form a disordered region.

This sequence belongs to the bacterial ribosomal protein bS20 family.

Binds directly to 16S ribosomal RNA. This is Small ribosomal subunit protein bS20 from Oleidesulfovibrio alaskensis (strain ATCC BAA-1058 / DSM 17464 / G20) (Desulfovibrio alaskensis).